A 425-amino-acid chain; its full sequence is Orexin/Hypocretin receptor type 1 (425 aa).

Positions 1–24 (MEPSATPGAQMGVPPGSREPSPVP) are disordered. Residues 1 to 46 (MEPSATPGAQMGVPPGSREPSPVPPDYEDEFLRYLWRDYLYPKQYE) are Extracellular-facing. A required for response to orexin-A region spans residues 26–41 (DYEDEFLRYLWRDYLY). Residues 47–67 (WVLIAAYVAVFVVALVGNTLV) traverse the membrane as a helical segment. Topologically, residues 68-82 (CLAVWRNHHMRTVTN) are cytoplasmic. The chain crosses the membrane as a helical span at residues 83-105 (YFIVNLSLADVLVTAICLPASLL). The Extracellular portion of the chain corresponds to 106-119 (VDITESWLFGHALC). Cys-119 and Cys-202 are joined by a disulfide. Residues 120 to 140 (KVIPYLQAVSVSVAVLTLSFI) form a helical membrane-spanning segment. The Cytoplasmic segment spans residues 141–160 (ALDRWYAICHPLLFKSTARR). Residues 161-182 (ARGSILGIWAVSLAIMVPQAAV) form a helical membrane-spanning segment. The Extracellular segment spans residues 183-213 (MECSSVLPELANRTRLFSVCDERWADDLYPK). N-linked (GlcNAc...) asparagine glycosylation occurs at Asn-194. A helical transmembrane segment spans residues 214–235 (IYHSCFFIVTYLAPLGLMAMAY). Over 236-298 (FQIFRKLWGR…QMRARRKTAK (63 aa)) the chain is Cytoplasmic. The helical transmembrane segment at 299-321 (MLMVVLLVFALCYLPISVLNVLK) threads the bilayer. Asn-318 provides a ligand contact to suvorexant. At 322 to 336 (RVFGMFRQASDREAV) the chain is on the extracellular side. A helical transmembrane segment spans residues 337 to 360 (YACFTFSHWLVYANSAANPIIYNF). Residues 361–425 (LSGKFREQFK…VLTSVTTVLP (65 aa)) lie on the Cytoplasmic side of the membrane.

The protein belongs to the G-protein coupled receptor 1 family.

Its subcellular location is the cell membrane. In terms of biological role, moderately selective excitatory receptor for orexin-A and, with a lower affinity, for orexin-B neuropeptide. Triggers an increase in cytoplasmic Ca(2+) levels in response to orexin-A binding. The sequence is that of Orexin/Hypocretin receptor type 1 from Homo sapiens (Human).